A 58-amino-acid chain; its full sequence is Small ribosomal subunit protein bS21 (58 aa).

The interval 34-58 is disordered; the sequence is KREHYEKPSVKRKKKSEAARKRKFK. Residues 43 to 58 are compositionally biased toward basic residues; the sequence is VKRKKKSEAARKRKFK.

Belongs to the bacterial ribosomal protein bS21 family.

The sequence is that of Small ribosomal subunit protein bS21 from Clostridium acetobutylicum (strain ATCC 824 / DSM 792 / JCM 1419 / IAM 19013 / LMG 5710 / NBRC 13948 / NRRL B-527 / VKM B-1787 / 2291 / W).